The chain runs to 374 residues: uncharacterized protein (374 aa).

The segment covering 86–104 (RPAATAGTTPATGASGSAR) has biased composition (low complexity). The segment at 86–109 (RPAATAGTTPATGASGSARPTDAA) is disordered. In terms of domain architecture, Macro spans 179 to 354 (WWRRSNTTRG…LQRVVFAVHG (176 aa)).

This is an uncharacterized protein from Mycobacterium tuberculosis (strain CDC 1551 / Oshkosh).